The sequence spans 96 residues: Putative regulatory protein Teth514_1762 (96 aa).

Belongs to the RemA family.

The sequence is that of Putative regulatory protein Teth514_1762 from Thermoanaerobacter sp. (strain X514).